Reading from the N-terminus, the 963-residue chain is Importin-13 (963 aa).

HEAT repeat units follow at residues 24-54, 56-88, 95-135, 142-179, 194-231, 236-268, 276-325, 330-372, 375-438, 440-476, 487-522, 524-558, 562-600, 603-648, 676-716, 720-754, 761-803, 815-845, 860-893, and 897-931; these read ENVEKALHQLYYDPNIENKNLAQKWLMQAQV, PQAWHFSWQLLQPDKVPEIQYFGASALHIKISR, TDQY…LSMM, AVADMVRLFQAEDSPVDSQGRCLALLELLTVLPEEFQT, LAVECGAVFPLLEQLLQQPSSPSCVRQKVLKCFSSWVQ, LQDCEALIQAAFAALQDSELFDSSVEAIVNAIS, VNTL…ALLD, WQSF…DDIL, EAEK…YEML, AELLSNLYDKLGRLLTSSEEPYSWQHTEALLYGFQSI, VVPGLIGLIPRISISNVQLADTVMFTIGALSEWLAD, PVMINSVLPLVLHALGNPELSVSSVSTLKKICREC, LPPYAANIVAVSQDVLMKQIHKTSQCMWLMQALGFLLSA, VEEN…SNLF, PVVV…VKTL, FAPMVPQLCEMLGRMYSTVPQASALDLTRQLVHIF, FPPI…ALKR, VKAVFQCAVLALKFPEAPTVKASCGFFTELL, EDGRMLLIAVLEAIGGQASRSLMDCFADILFALN, and FSLLSMWIKEALQPPGFPSARLSPEQKDTFSQQIL. One can recognise an Importin N-terminal domain in the interval 45-111; that stretch reads AQKWLMQAQV…KAHSFTQITR (67 aa).

This sequence belongs to the importin beta family. In terms of assembly, interacts with UBC9, RAN, RBM8A, eIF-1A and PAX6. As to expression, expressed in fetal brain, heart, intestine and kidney.

The protein localises to the cytoplasm. Its subcellular location is the nucleus. Functionally, functions in nuclear protein import as nuclear transport receptor. Serves as receptor for nuclear localization signals (NLS) in cargo substrates. Is thought to mediate docking of the importin/substrate complex to the nuclear pore complex (NPC) through binding to nucleoporin and the complex is subsequently translocated through the pore by an energy requiring, Ran-dependent mechanism. At the nucleoplasmic side of the NPC, Ran binds to the importin, the importin/substrate complex dissociates and importin is re-exported from the nucleus to the cytoplasm where GTP hydrolysis releases Ran. The directionality of nuclear import is thought to be conferred by an asymmetric distribution of the GTP- and GDP-bound forms of Ran between the cytoplasm and nucleus. Mediates the nuclear import of UBC9, the RBM8A/MAGOH complex, PAX6 and probably other members of the paired homeobox family. Also mediates nuclear export of eIF-1A, and the cytoplasmic release of eIF-1A is triggered by the loading of import substrates onto IPO13. In Rattus norvegicus (Rat), this protein is Importin-13 (Ipo13).